Consider the following 955-residue polypeptide: Glycine dehydrogenase (decarboxylating) (955 aa).

At lysine 702 the chain carries N6-(pyridoxal phosphate)lysine.

Belongs to the GcvP family. The glycine cleavage system is composed of four proteins: P, T, L and H. Pyridoxal 5'-phosphate serves as cofactor.

The catalysed reaction is N(6)-[(R)-lipoyl]-L-lysyl-[glycine-cleavage complex H protein] + glycine + H(+) = N(6)-[(R)-S(8)-aminomethyldihydrolipoyl]-L-lysyl-[glycine-cleavage complex H protein] + CO2. In terms of biological role, the glycine cleavage system catalyzes the degradation of glycine. The P protein binds the alpha-amino group of glycine through its pyridoxal phosphate cofactor; CO(2) is released and the remaining methylamine moiety is then transferred to the lipoamide cofactor of the H protein. The sequence is that of Glycine dehydrogenase (decarboxylating) from Bradyrhizobium diazoefficiens (strain JCM 10833 / BCRC 13528 / IAM 13628 / NBRC 14792 / USDA 110).